A 204-amino-acid polypeptide reads, in one-letter code: MGEAEVGGTGAPGDKGPGEAAPSPAEETVVWSPEVEVCLFHAMLGHKPVGVNRHFHMICIRDKFSQNIGRQVPSKVIWDHLSTMYDMQALHESEILPFPNPERNFVLPDEIIQEVREGKVVIEEEMKEEMKEDVDPHSGADDVFSSSGSLGKALEKSSKDKEKNSSDLGCKEGADKRKRSRVTDKVLTANSNPSSPSAAKRRRT.

The segment covering 1–15 has biased composition (gly residues); it reads MGEAEVGGTGAPGDK. The interval 1–27 is disordered; that stretch reads MGEAEVGGTGAPGDKGPGEAAPSPAEE. Gly2 is subject to N-acetylglycine. Ser23 bears the Phosphoserine mark. Residue Lys127 forms a Glycyl lysine isopeptide (Lys-Gly) (interchain with G-Cter in SUMO2) linkage. 2 stretches are compositionally biased toward basic and acidic residues: residues 128-140 and 153-175; these read EEMKEDVDPHSGA and ALEKSSKDKEKNSSDLGCKEGAD. The segment at 128–204 is disordered; it reads EEMKEDVDPH…SPSAAKRRRT (77 aa). The segment covering 189–198 has biased composition (low complexity); that stretch reads ANSNPSSPSA. 2 positions are modified to phosphoserine: Ser191 and Ser195.

This sequence belongs to the EAF7 family. As to quaternary structure, component of the NuA4 histone acetyltransferase complex which contains the catalytic subunit KAT5/TIP60 and the subunits EP400, TRRAP/PAF400, BRD8/SMAP, EPC1, DMAP1/DNMAP1, RUVBL1/TIP49, RUVBL2, ING3, actin, ACTL6A/BAF53A, MORF4L1/MRG15, MORF4L2/MRGX, MRGBP, YEATS4/GAS41, VPS72/YL1 and MEAF6. MRGBP may interact directly with MORF4L1/MRG15 and MORF4L2/MRGX.

It localises to the nucleus. Functionally, component of the NuA4 histone acetyltransferase (HAT) complex which is involved in transcriptional activation of select genes principally by acetylation of nucleosomal histones H4 and H2A. This modification may both alter nucleosome - DNA interactions and promote interaction of the modified histones with other proteins which positively regulate transcription. This complex may be required for the activation of transcriptional programs associated with oncogene and proto-oncogene mediated growth induction, tumor suppressor mediated growth arrest and replicative senescence, apoptosis, and DNA repair. NuA4 may also play a direct role in DNA repair when recruited to sites of DNA damage. The protein is MRG/MORF4L-binding protein (Mrgbp) of Mus musculus (Mouse).